The sequence spans 209 residues: Hyperpolarization-activated voltage-gated potassium channel (209 aa).

Topologically, residues 1–10 are cytoplasmic; it reads MNLKDRRLKK. A helical transmembrane segment spans residues 11–31; the sequence is IMEVLSLIFTFEIVASFILST. At 32-38 the chain is on the extracellular side; that stretch reads YNPPYQD. Residues 39 to 59 form a helical membrane-spanning segment; that stretch reads LLIKLDYISIMFFTFEFIYNF. Topologically, residues 60–71 are cytoplasmic; the sequence is YYVEDKAKFFKD. Residues 72–92 form a helical membrane-spanning segment; it reads IYNIVDAIVVIAFLLYSLQVF. At 93–96 the chain is on the extracellular side; sequence YSKA. A helical; Voltage-sensor transmembrane segment spans residues 97 to 117; that stretch reads FLGLRVINLLRILVLLRIIKL. Residues 118 to 125 are Cytoplasmic-facing; sequence RKLEENQA. Residues 126 to 146 traverse the membrane as a helical segment; sequence LINFLTLLTICFIASCLIWIV. The Extracellular segment spans residues 147 to 181; it reads ESGVNPAINNFFDAFYFTTISITTVGYGDITPKTD. A Selectivity filter motif is present at residues 170–175; it reads TVGYGD. A helical membrane pass occupies residues 182-202; it reads AGKLIIIFSVLFFISGLITSL. Over 203 to 209 the chain is Cytoplasmic; that stretch reads QKALKGD.

The protein belongs to the potassium channel family. In terms of assembly, homotetramer.

The protein resides in the cell membrane. Its function is as follows. Voltage-gated potassium-selective channel opened by hyperpolarization. The sequence is that of Hyperpolarization-activated voltage-gated potassium channel (mvp) from Methanocaldococcus jannaschii (strain ATCC 43067 / DSM 2661 / JAL-1 / JCM 10045 / NBRC 100440) (Methanococcus jannaschii).